We begin with the raw amino-acid sequence, 122 residues long: Large ribosomal subunit protein uL18 (122 aa).

It belongs to the universal ribosomal protein uL18 family. In terms of assembly, part of the 50S ribosomal subunit; part of the 5S rRNA/L5/L18/L25 subcomplex. Contacts the 5S and 23S rRNAs.

Its function is as follows. This is one of the proteins that bind and probably mediate the attachment of the 5S RNA into the large ribosomal subunit, where it forms part of the central protuberance. The chain is Large ribosomal subunit protein uL18 from Geobacter sp. (strain M21).